The following is a 78-amino-acid chain: Pigment-dispersing hormone peptides (78 aa).

An N-terminal signal peptide occupies residues 1 to 22 (MRSAVIVTMLVVVALAALLTQG). A75 carries the alanine amide modification.

This sequence belongs to the arthropod PDH family. In terms of tissue distribution, expressed in eyestalk tissue and cerebral ganglia.

The protein resides in the secreted. Its function is as follows. The pigment-dispersing hormone causes the migration of the distal retinal pigment into the proximal end of the pigment chromatophore cells and thus decreases the amount of light entering the retinulas. May also function as a neurotransmitter and/or neuromodulator. This Carcinus maenas (Common shore crab) protein is Pigment-dispersing hormone peptides.